The sequence spans 191 residues: Cyclin-dependent kinase inhibitor 1 (191 aa).

Positions L62 to R81 are disordered. The tract at residues Q162–E191 is required for inhibitory function and interaction with CDK kinase complexes.

It belongs to the CDI family. ICK/KRP subfamily. As to quaternary structure, specifically interacts with CDKA-1, but not with CDKB1-1. Interacts with CYCD2-1 and CYCD3-1. In terms of processing, ubiquitinated independently by RKP and SCF (SKP1-CUL1-FBL5/SKP2B) protein ligase complex, leading to proteasomal degradation. In terms of tissue distribution, expressed at low levels in roots, stems, leaves and flowers.

Its subcellular location is the nucleus. The protein resides in the nucleoplasm. Functionally, binds and inhibits CYCD2-1/CDKA-1 kinase complex activity. Regulates cell division which is crucial for plant growth, development and morphogenesis. Functions in turning cells from a mitotic to an endoreplicating cell cycle mode. Acts cell- and non-cell-autonomously to regulate endoreduplication by allowing S phase progression, but blocking entry into mitosis. Keeps on the one hand the plant cell cycle locally controlled, and on the other hand provides a possibility of linking cell cycle control in single cells with the supracellular organization of a tissue or an organ. May target specifically CDKA-1. This is Cyclin-dependent kinase inhibitor 1 (KRP1) from Arabidopsis thaliana (Mouse-ear cress).